Reading from the N-terminus, the 304-residue chain is GTPase Era (304 aa).

Residues 7–178 (KCGVVAVLGA…KNALAALMPE (172 aa)) enclose the Era-type G domain. A G1 region spans residues 15-22 (GAPNAGKS). 15–22 (GAPNAGKS) contributes to the GTP binding site. Residues 41-45 (QTTRA) are G2. The tract at residues 66–69 (DTPG) is G3. GTP-binding positions include 66 to 70 (DTPGI) and 128 to 131 (NKVD). Residues 128–131 (NKVD) form a G4 region. The interval 157-159 (VSA) is G5. A KH type-2 domain is found at 209–286 (LHEELPYDSA…HLFLHVKVDE (78 aa)).

The protein belongs to the TRAFAC class TrmE-Era-EngA-EngB-Septin-like GTPase superfamily. Era GTPase family. In terms of assembly, monomer.

It is found in the cytoplasm. The protein resides in the cell inner membrane. Functionally, an essential GTPase that binds both GDP and GTP, with rapid nucleotide exchange. Plays a role in 16S rRNA processing and 30S ribosomal subunit biogenesis and possibly also in cell cycle regulation and energy metabolism. The sequence is that of GTPase Era from Erythrobacter litoralis (strain HTCC2594).